The following is a 210-amino-acid chain: LexA repressor (210 aa).

Residues 28–48 constitute a DNA-binding region (H-T-H motif); the sequence is FEEIAEGMGLSSLATVHKHIG. Active-site for autocatalytic cleavage activity residues include S131 and K169.

The protein belongs to the peptidase S24 family. Homodimer.

The enzyme catalyses Hydrolysis of Ala-|-Gly bond in repressor LexA.. Functionally, represses a number of genes involved in the response to DNA damage (SOS response), including recA and lexA. In the presence of single-stranded DNA, RecA interacts with LexA causing an autocatalytic cleavage which disrupts the DNA-binding part of LexA, leading to derepression of the SOS regulon and eventually DNA repair. The sequence is that of LexA repressor from Koribacter versatilis (strain Ellin345).